We begin with the raw amino-acid sequence, 334 residues long: Cytoskeleton protein RodZ (334 aa).

The Cytoplasmic segment spans residues 1–111 (MNTEATHDQN…LGKRRKKRDG (111 aa)). One can recognise an HTH cro/C1-type domain in the interval 19–71 (LRNAREQLGLSQQAVAERLCLKVSTVRDIEEDKAPSDLASTFLRGYIRSYARL). Positions 30–49 (QQAVAERLCLKVSTVRDIEE) form a DNA-binding region, H-T-H motif. A helical; Signal-anchor for type II membrane protein transmembrane segment spans residues 112–132 (WLMSFTWLVLFVVVGLTGAWW). Over 133 to 334 (WQNHKAQQEE…TLNAEPTPAQ (202 aa)) the chain is Periplasmic. The segment at 155–241 (NADKDSGQSV…PSALPTSQAG (87 aa)) is disordered. Low complexity-rich tracts occupy residues 170-211 (AATS…TVVA) and 219-241 (TAAT…SQAG).

Belongs to the RodZ family.

It is found in the cell inner membrane. Cytoskeletal protein that is involved in cell-shape control through regulation of the length of the long axis. The chain is Cytoskeleton protein RodZ from Salmonella agona (strain SL483).